The chain runs to 1076 residues: Bifunctional glutamine synthetase adenylyltransferase/adenylyl-removing enzyme (1076 aa).

The tract at residues 1-521 (MESSMFKPSS…LHLDIYYRPM (521 aa)) is adenylyl removase. Positions 524 to 1076 (VNAQMENDQI…LERNRRRAQR (553 aa)) are adenylyl transferase. Positions 1041–1056 (ATATASAATPQPQTAP) are enriched in low complexity. Residues 1041–1076 (ATATASAATPQPQTAPRPRMHVIAPRLERNRRRAQR) form a disordered region.

This sequence belongs to the GlnE family. Requires Mg(2+) as cofactor.

It carries out the reaction [glutamine synthetase]-O(4)-(5'-adenylyl)-L-tyrosine + phosphate = [glutamine synthetase]-L-tyrosine + ADP. The enzyme catalyses [glutamine synthetase]-L-tyrosine + ATP = [glutamine synthetase]-O(4)-(5'-adenylyl)-L-tyrosine + diphosphate. In terms of biological role, involved in the regulation of glutamine synthetase GlnA, a key enzyme in the process to assimilate ammonia. When cellular nitrogen levels are high, the C-terminal adenylyl transferase (AT) inactivates GlnA by covalent transfer of an adenylyl group from ATP to specific tyrosine residue of GlnA, thus reducing its activity. Conversely, when nitrogen levels are low, the N-terminal adenylyl removase (AR) activates GlnA by removing the adenylyl group by phosphorolysis, increasing its activity. The regulatory region of GlnE binds the signal transduction protein PII (GlnB) which indicates the nitrogen status of the cell. This chain is Bifunctional glutamine synthetase adenylyltransferase/adenylyl-removing enzyme, found in Bifidobacterium longum subsp. infantis (strain ATCC 15697 / DSM 20088 / JCM 1222 / NCTC 11817 / S12).